Consider the following 418-residue polypeptide: Outer membrane protein assembly factor BamB (418 aa).

An N-terminal signal peptide occupies residues 1-28 (MFHNTCGRKGRFARAMGMALAISVTLSG). C29 is lipidated: N-palmitoyl cysteine. Residue C29 is the site of S-diacylglycerol cysteine attachment.

It belongs to the BamB family. In terms of assembly, part of the Bam complex.

The protein localises to the cell outer membrane. Its function is as follows. Part of the outer membrane protein assembly complex, which is involved in assembly and insertion of beta-barrel proteins into the outer membrane. The sequence is that of Outer membrane protein assembly factor BamB from Alteromonas naphthalenivorans.